Here is a 317-residue protein sequence, read N- to C-terminus: Ferrochelatase (317 aa).

The Fe cation site is built by His-192 and Glu-271.

It belongs to the ferrochelatase family.

It localises to the cytoplasm. It carries out the reaction heme b + 2 H(+) = protoporphyrin IX + Fe(2+). It functions in the pathway porphyrin-containing compound metabolism; protoheme biosynthesis; protoheme from protoporphyrin-IX: step 1/1. In terms of biological role, catalyzes the ferrous insertion into protoporphyrin IX. The sequence is that of Ferrochelatase from Citrifermentans bemidjiense (strain ATCC BAA-1014 / DSM 16622 / JCM 12645 / Bem) (Geobacter bemidjiensis).